The following is a 784-amino-acid chain: MAAVAAAPGPGEAGESEQDSKTTPGEWRLGELQCEPIVAVLDSERQSLIRCEMDSDTLEKAGPVVEQLGGSGTDQVYGIDKNSDFESVSVMDYKPPYRGINQERIAGENKKARHEQLPRHTFLQKEPTPMILSEVRDSGVHTEMCLEEATLSSNNDGSETSLNDPDCDIGSMGTSEGSVVTSGIGSLIPGSEVQVTLDHIIQDALVVSFCHGNRIFSGVLMDLSKRFGPHGIPVTVHPRREYKNKPVESIQEESKSFHEETLLKSEENVTPPEDVTPIQQSESCEIQNLWTTKPPPLFHEGAPYPPPLFIRDTYNQSIPQPPPRKIKRPKKKIYREEPTSIINAIKLRPRQVLCDKCKNNVVADKKEIRKVATDSYKTEEGKRRRHETITTVNKKLKTDHKVNGKGQHESQKRAGVTKVPNLAHGRGKVVKVPSQTSAAKTQLHTKKVLQNKNMDHVKAREVLKMAKEKAQKKQKVTTSSKNAHSKVHFTRRLQNSNSGTLPPRLRIKPQRYRNEENDSSLKPGLETLRSSKMGIKPQTRYSATRSAGEAPSEIQSPSNGPEEVSSEIQDTNVCVPPEEQDLQQTLGKRGSKSNITVYMAINQKKANSSSASVCSSDSTDDMKSSHSECSSTENFDFPPGSMHTPSSSSASSKEEKKLSNSLKIKMFSKNVSKCVTPDGRTICVGDIVWAKIYGFPWWPARILAITISRKDNGLLIRQEARISWFGSPTTSFLALSQLAPFLENFQSRFNKKRKGLYRKAITEAAKAAKQLTPEVRALLTQFET.

The span at 1 to 10 (MAAVAAAPGP) shows a compositional bias: low complexity. Disordered regions lie at residues 1–29 (MAAV…EWRL), 399–443 (DHKV…KTQL), 468–570 (EKAQ…EIQD), and 609–655 (SSAS…SKEE). Residues 399–412 (DHKVNGKGQHESQK) show a composition bias toward basic and acidic residues. Polar residues predominate over residues 433–442 (PSQTSAAKTQ). A PWWP domain is found at 684–744 (VGDIVWAKIY…LSQLAPFLEN (61 aa)).

The protein localises to the nucleus. H2A.Z-specific chromatin binding protein which plays an important role in the neural crest cell differentiation and/or migration during early development and is essential for the development of the head and eye. Acts as an adapter between distinct nucleosome components (H3K36me3 or H2A.Z) and chromatin-modifying complexes, contributing to the regulation of the levels of histone acetylation at actively transcribed genes. The polypeptide is PWWP domain-containing protein 2A (pwwp2a) (Xenopus laevis (African clawed frog)).